The chain runs to 448 residues: Nuclear distribution protein PAC1 (448 aa).

Residues 9 to 41 enclose the LisH domain; the sequence is QAEELHKSIIAYLAANNFQDSVTAMRTELNLGE. The disordered stretch occupies residues 74 to 95; the sequence is SATPTSLSNRKQDPASWLPAGP. WD repeat units lie at residues 102–143, 145–185, 189–236, 239–278, 283–343, 345–384, and 389–444; these read SHRT…RTVK, HTKA…KNIR, GHDH…CLKT, GHSD…PETK, GHEH…IKTL, GHDN…KCVK, and MHEH…TSLR.

It belongs to the WD repeat LIS1/nudF family. As to quaternary structure, self-associates. Interacts with NDL1 and dynein.

It localises to the cytoplasm. Its subcellular location is the cytoskeleton. The protein resides in the spindle pole. Functionally, positively regulates the activity of the minus-end directed microtubule motor protein dynein. May enhance dynein-mediated microtubule sliding by targeting dynein to the microtubule plus end. Required for nuclear migration during vegetative growth as well as development. Required for retrograde early endosome (EE) transport from the hyphal tip. Required for localization of dynein to the mitotic spindle poles. Recruits additional proteins to the dynein complex at SPBs. The chain is Nuclear distribution protein PAC1 from Fusarium vanettenii (strain ATCC MYA-4622 / CBS 123669 / FGSC 9596 / NRRL 45880 / 77-13-4) (Fusarium solani subsp. pisi).